Consider the following 228-residue polypeptide: Ribose-5-phosphate isomerase A (228 aa).

Substrate-binding positions include 32 to 35 (TGST), 85 to 88 (DGAD), and 98 to 101 (KGGG). Glu-107 functions as the Proton acceptor in the catalytic mechanism. Residue Lys-125 participates in substrate binding.

The protein belongs to the ribose 5-phosphate isomerase family. As to quaternary structure, homodimer.

It catalyses the reaction aldehydo-D-ribose 5-phosphate = D-ribulose 5-phosphate. It participates in carbohydrate degradation; pentose phosphate pathway; D-ribose 5-phosphate from D-ribulose 5-phosphate (non-oxidative stage): step 1/1. In terms of biological role, catalyzes the reversible conversion of ribose-5-phosphate to ribulose 5-phosphate. This is Ribose-5-phosphate isomerase A from Cupriavidus pinatubonensis (strain JMP 134 / LMG 1197) (Cupriavidus necator (strain JMP 134)).